We begin with the raw amino-acid sequence, 356 residues long: Tyrosine recombinase XerS (356 aa).

The 106-residue stretch at 16–121 folds into the Core-binding (CB) domain; that stretch reads LMPWFVLEYY…ALSSLYKYLT (106 aa). One can recognise a Tyr recombinase domain in the interval 169-354; sequence KFLDYVENEY…VNDEQKNALD (186 aa). Catalysis depends on residues arginine 210, lysine 234, histidine 306, arginine 309, and histidine 332. Tyrosine 341 (O-(3'-phospho-DNA)-tyrosine intermediate) is an active-site residue.

This sequence belongs to the 'phage' integrase family. XerS subfamily.

The protein localises to the cytoplasm. With respect to regulation, ftsK is required for recombination. In terms of biological role, site-specific tyrosine recombinase, which acts by catalyzing the cutting and rejoining of the recombining DNA molecules. Essential to convert dimers of the bacterial chromosome into monomers to permit their segregation at cell division. The sequence is that of Tyrosine recombinase XerS from Streptococcus thermophilus (strain CNRZ 1066).